Here is a 426-residue protein sequence, read N- to C-terminus: MTSATTTEATAKDLQEKLSLKENDVVEDDGKVEENDAAEEGASNGEKKKKKKKKSSKKKKTPQEQTNPPTVGLSKIFVNKKYPVGEVCDYAEDNLWRTTDEEKRALDRQNFDQYNDLRRAAEVHRQARQYAQSVIKPGMSMMDVVNTIENTTRALVEEDGLKSGIGFPTGVSLNHCAAHYTPNAGDTTILKEKDVMKVDIGVHVNGRIVDSAFTMSFDPQYDNLLAAVKAATNKGIEEAGIDARLNEIGEAIQEVMESYEVEINGKTHQVKSIRNLCGHNLDPYIIHGGKSVPIVKGGEEIKMEEGEIFAIETFGSTGRGVVHEDMECSHYAKIPDAGHIPLRLPRAKALLNTITQNFGTLPFCRRYLDRIGESKYLLALNNLVSAGIVQDYPPLCDIRGSYTAQFEHTIILHPTQKEVVSRGDDY.

The tract at residues Met1–Gly72 is disordered. A compositionally biased stretch (basic and acidic residues) spans Thr10–Glu34. The segment covering Lys47–Lys60 has biased composition (basic residues). His179 serves as a coordination point for substrate. The a divalent metal cation site is built by Asp199, Asp210, and His279. His287 serves as a coordination point for substrate. The a divalent metal cation site is built by Glu312 and Glu407.

It belongs to the peptidase M24A family. Methionine aminopeptidase eukaryotic type 2 subfamily. Requires Co(2+) as cofactor. It depends on Zn(2+) as a cofactor. Mn(2+) is required as a cofactor. The cofactor is Fe(2+).

The protein resides in the cytoplasm. It carries out the reaction Release of N-terminal amino acids, preferentially methionine, from peptides and arylamides.. Functionally, cotranslationally removes the N-terminal methionine from nascent proteins. The N-terminal methionine is often cleaved when the second residue in the primary sequence is small and uncharged (Met-Ala-, Cys, Gly, Pro, Ser, Thr, or Val). This Schizosaccharomyces pombe (strain 972 / ATCC 24843) (Fission yeast) protein is Methionine aminopeptidase 2 (fma2).